We begin with the raw amino-acid sequence, 122 residues long: Flagellar protein FliT (122 aa).

The tract at residues 1–50 (MTSTVEFINRWQRIALLSQSLLELAQRGEWDLLLQQEVSYLQSIETVMEK) is required for homodimerization. The tract at residues 60–98 (IQDMVAGYIKQTLDNEQLLKGLLQQRLDELSSLIGQSTR) is fliD binding.

This sequence belongs to the FliT family. Homodimer. Interacts with FliD and FlhC.

It is found in the cytoplasm. The protein localises to the cytosol. Functionally, dual-function protein that regulates the transcription of class 2 flagellar operons and that also acts as an export chaperone for the filament-capping protein FliD. As a transcriptional regulator, acts as an anti-FlhDC factor; it directly binds FlhC, thus inhibiting the binding of the FlhC/FlhD complex to class 2 promoters, resulting in decreased expression of class 2 flagellar operons. As a chaperone, effects FliD transition to the membrane by preventing its premature polymerization, and by directing it to the export apparatus. This is Flagellar protein FliT from Salmonella schwarzengrund (strain CVM19633).